A 455-amino-acid polypeptide reads, in one-letter code: tRNA modification GTPase MnmE (455 aa).

(6S)-5-formyl-5,6,7,8-tetrahydrofolate-binding residues include Arg24, Glu81, and Lys120. Residues Gly216–Gly378 enclose the TrmE-type G domain. Asn226 serves as a coordination point for K(+). GTP is bound by residues Asn226 to Ser231, Thr245 to Thr251, Asp270 to Gly273, and Asn335 to Asp338. Ser230 provides a ligand contact to Mg(2+). Positions 245, 247, and 250 each coordinate K(+). Residue Thr251 coordinates Mg(2+). Lys455 is a binding site for (6S)-5-formyl-5,6,7,8-tetrahydrofolate.

This sequence belongs to the TRAFAC class TrmE-Era-EngA-EngB-Septin-like GTPase superfamily. TrmE GTPase family. Homodimer. Heterotetramer of two MnmE and two MnmG subunits. Requires K(+) as cofactor.

It is found in the cytoplasm. Its function is as follows. Exhibits a very high intrinsic GTPase hydrolysis rate. Involved in the addition of a carboxymethylaminomethyl (cmnm) group at the wobble position (U34) of certain tRNAs, forming tRNA-cmnm(5)s(2)U34. This chain is tRNA modification GTPase MnmE, found in Stutzerimonas stutzeri (strain A1501) (Pseudomonas stutzeri).